A 152-amino-acid polypeptide reads, in one-letter code: Large ribosomal subunit protein uL15 (152 aa).

The segment at 1-57 (MTSTLNTLKSNSGSRKKKLRKGRGIAAGQGASCGFGMRGQKSRSGRPTRPGFEGGQM) is disordered. Over residues 14 to 23 (SRKKKLRKGR) the composition is skewed to basic residues. Residues 25-37 (IAAGQGASCGFGM) show a composition bias toward gly residues.

Belongs to the universal ribosomal protein uL15 family. As to quaternary structure, part of the 50S ribosomal subunit.

Functionally, binds to the 23S rRNA. The polypeptide is Large ribosomal subunit protein uL15 (Prochlorococcus marinus (strain MIT 9301)).